The following is a 109-amino-acid chain: Large ribosomal subunit protein uL22 (109 aa).

Residues 84 to 95 show a composition bias toward basic residues; it reads ARGTASRIRKPT. Residues 84-109 form a disordered region; the sequence is ARGTASRIRKPTSHIMVEVSKPSKEA.

Belongs to the universal ribosomal protein uL22 family. As to quaternary structure, part of the 50S ribosomal subunit.

In terms of biological role, this protein binds specifically to 23S rRNA; its binding is stimulated by other ribosomal proteins, e.g. L4, L17, and L20. It is important during the early stages of 50S assembly. It makes multiple contacts with different domains of the 23S rRNA in the assembled 50S subunit and ribosome. The globular domain of the protein is located near the polypeptide exit tunnel on the outside of the subunit, while an extended beta-hairpin is found that lines the wall of the exit tunnel in the center of the 70S ribosome. This Campylobacter hominis (strain ATCC BAA-381 / DSM 21671 / CCUG 45161 / LMG 19568 / NCTC 13146 / CH001A) protein is Large ribosomal subunit protein uL22.